A 215-amino-acid chain; its full sequence is MSQEDSTSAAAAQQPTSRPAPKLNERILSSLSRRGGGAHPWHDLEIGPGAPAVFNVVVEITKGSKVKYELDKKTGLIKVDRVLYSSVVYPHNYGFIPRTLCEDNDPMDVLVLMQEPVIPGSFLRARAIGLMPMIDQGEKDDKIIAVCADDPEYRHYSTSVSLLPRLQEIKRLEDYKKNENKEVAVDAFLPATTAREAIQYSMDLYAQYILQSLRQ.

The span at methionine 1–proline 21 shows a compositional bias: low complexity. The interval methionine 1–asparagine 24 is disordered. Mg(2+) contacts are provided by aspartate 103, aspartate 108, and aspartate 140.

This sequence belongs to the PPase family. Requires Mg(2+) as cofactor. In terms of tissue distribution, expressed in metabolically active tissue such as root, shoot, embryo and aleurone.

The protein localises to the cytoplasm. The catalysed reaction is diphosphate + H2O = 2 phosphate + H(+). In terms of biological role, may play a role in germination. In Hordeum vulgare subsp. vulgare (Domesticated barley), this protein is Soluble inorganic pyrophosphatase (IPP).